The chain runs to 157 residues: MALSLPPRPALLFLVLMSVTLMASAFPQPQLRPLQSNLPAIGQEDSKGEQWEVVYPSISLRDWSIQMLTAPDFGAAKTGREQLVADDWLPLSQSQMEEELVKGWTGDWPSRVGHQQKRNIVVADDAAFREKSKLLTAMERQKWLNSYMQKLLVVNSK.

The first 25 residues, 1 to 25 (MALSLPPRPALLFLVLMSVTLMASA), serve as a signal peptide directing secretion. A propeptide spanning residues 26 to 116 (FPQPQLRPLQ…DWPSRVGHQQ (91 aa)) is cleaved from the precursor.

It belongs to the parathyroid hormone family.

The protein resides in the secreted. Its function is as follows. Plays a role as a potent and selective agonist of pth2r resulting in adenyl cyclase activation and intracellular calcium level elevation. This Danio rerio (Zebrafish) protein is Tuberoinfundibular peptide of 39 residues.